The primary structure comprises 73 residues: Translation initiation factor IF-1 (73 aa).

The S1-like domain occupies 1–72; that stretch reads MAKEEAIEKD…SKGRIVYRYK (72 aa).

The protein belongs to the IF-1 family. Component of the 30S ribosomal translation pre-initiation complex which assembles on the 30S ribosome in the order IF-2 and IF-3, IF-1 and N-formylmethionyl-tRNA(fMet); mRNA recruitment can occur at any time during PIC assembly.

The protein resides in the cytoplasm. One of the essential components for the initiation of protein synthesis. Stabilizes the binding of IF-2 and IF-3 on the 30S subunit to which N-formylmethionyl-tRNA(fMet) subsequently binds. Helps modulate mRNA selection, yielding the 30S pre-initiation complex (PIC). Upon addition of the 50S ribosomal subunit IF-1, IF-2 and IF-3 are released leaving the mature 70S translation initiation complex. This is Translation initiation factor IF-1 from Salinibacter ruber (strain DSM 13855 / M31).